The sequence spans 425 residues: Dipeptidase tcpJ (425 aa).

Residues His-46, Asp-48, and Glu-158 each contribute to the Zn(2+) site. Substrate-binding residues include His-185, Arg-259, and Asp-318.

The protein belongs to the metallo-dependent hydrolases superfamily. Peptidase M19 family. It depends on Zn(2+) as a cofactor.

The enzyme catalyses an L-aminoacyl-L-amino acid + H2O = 2 an L-alpha-amino acid. Functionally, dipeptidase; part of the gene cluster that mediates the biosynthesis of an unusual class of epipolythiodioxopiperazines (ETPs) lacking the reactive thiol group important for toxicity. Firstly, L-tyrosine is prenylated by tcpD, before undergoing condensation with L-glycine in a reaction catalyzed by the NRPS tcpP leading to the diketopiperazine (DKP) backbone. Afterwards the alpha-carbon of tyrosine is oxidized by the cytochrome P450 tcpC to form a hydroxyl group. However, in contrast other ETP biosynthesis pathways studied so far, tcpC is not able to bishydroxylate the DKP at both alpha-carbon positions, but hydroxylates the alpha-carbon of the tyrosine part and the nitrogen of the glycine part. The next steps involve an alpha,beta-elimination reaction catalyzed by tcpI, a methylation by the methyltransferase tcpN the action of the four enzyme cascade tcpG/K/J/I. Due to a dysfunctional cytochrome P450 monooxygenase tcpC, the pathway leads to the biosynthesis of probable non-toxic metabolites lacking the reactive thiol group. This is Dipeptidase tcpJ from Claviceps purpurea (strain 20.1) (Ergot fungus).